The primary structure comprises 288 residues: Release factor glutamine methyltransferase (288 aa).

S-adenosyl-L-methionine-binding positions include 123 to 127 (GTGSG), D146, and N190. 190-193 (NPPY) contributes to the substrate binding site.

This sequence belongs to the protein N5-glutamine methyltransferase family. PrmC subfamily.

The enzyme catalyses L-glutaminyl-[peptide chain release factor] + S-adenosyl-L-methionine = N(5)-methyl-L-glutaminyl-[peptide chain release factor] + S-adenosyl-L-homocysteine + H(+). In terms of biological role, methylates the class 1 translation termination release factors RF1/PrfA and RF2/PrfB on the glutamine residue of the universally conserved GGQ motif. In Bacillus subtilis (strain 168), this protein is Release factor glutamine methyltransferase.